The following is a 255-amino-acid chain: MAAIDLNSDLGESYGAWRMGDDEAMLAIVSSANIACGFHAGDPAGIYRTVKAAAEKGVVVGAHVSYPDRVGFGRRDLDATSEELIADVIYQIGALKGVAAAAGTTVRYVKPHGALYNRIANDAKQGQAVIDGIKAIDPSLVLMGLANAPILDLARKAGLAVVAEAFADRAYTPEGQLVSRREAGAVLHDAAKIAERMVQLAREGTLEAIDGSIIKIEAQSICVHGDSPGAVAIAQEIRRRFEADGIAIRSFASDR.

This sequence belongs to the LamB/PxpA family. Forms a complex composed of PxpA, PxpB and PxpC.

It catalyses the reaction 5-oxo-L-proline + ATP + 2 H2O = L-glutamate + ADP + phosphate + H(+). Its function is as follows. Catalyzes the cleavage of 5-oxoproline to form L-glutamate coupled to the hydrolysis of ATP to ADP and inorganic phosphate. In Agrobacterium fabrum (strain C58 / ATCC 33970) (Agrobacterium tumefaciens (strain C58)), this protein is 5-oxoprolinase subunit A 1.